The primary structure comprises 444 residues: Citrate-proton symporter (444 aa).

Residues 1–41 are Cytoplasmic-facing; the sequence is MPTARCSMRASSTAPVRMMATAGGARIGAILRVTSGNFLEQ. The helical transmembrane segment at 42 to 62 threads the bilayer; that stretch reads FDFFLFGFYATYIAHTFFPAS. Residues 63–72 are Periplasmic-facing; it reads SEFASLMMTF. The helical transmembrane segment at 73 to 93 threads the bilayer; the sequence is AVFGAGFLMRPIGAIVLGAYI. Topologically, residues 94–114 are cytoplasmic; it reads DKVGRRKGLIVTLSIMATGTF. The helical transmembrane segment at 115 to 135 threads the bilayer; that stretch reads LIVLIPSYQTIGLWAPLLVLI. The Periplasmic portion of the chain corresponds to 136–137; sequence GR. Residues 138–158 traverse the membrane as a helical segment; it reads LLQGFSAGAELGGVSVYLAEI. Residues 159–177 lie on the Cytoplasmic side of the membrane; it reads ATPGRKGFYTSWQSGSQQV. Residues 178–198 traverse the membrane as a helical segment; that stretch reads AIMVAAAMGFALNAVLEPSAI. Residue S199 is a topological domain, periplasmic. A helical membrane pass occupies residues 200–220; the sequence is DWGWRIPFLFGVLIVPFIFIL. Residues 221–251 lie on the Cytoplasmic side of the membrane; sequence RRKLEETQEFTARRHHLAMRQVFATLLANWQ. A helical transmembrane segment spans residues 252–272; sequence VVIAGMMMVAMTTTAFYLITV. Residues 273–289 lie on the Periplasmic side of the membrane; the sequence is YAPTFGKKVLMLSASDS. The chain crosses the membrane as a helical span at residues 290-310; the sequence is LLVTLLVAISNFFWLPVGGAL. Residues 311-318 lie on the Cytoplasmic side of the membrane; it reads SDRFGRRS. Residues 319 to 339 traverse the membrane as a helical segment; the sequence is VLIAMTLLALATAWPALTMLA. Position 340 (N340) is a topological domain, periplasmic. Residues 341–361 form a helical membrane-spanning segment; that stretch reads APSFLMMLSVLLWLSFIYGMY. Residues 362 to 379 are Cytoplasmic-facing; the sequence is NGAMIPALTEIMPAEVRV. A helical transmembrane segment spans residues 380 to 400; it reads AGFSLAYSLATAVFGGFTPVI. Residues 401–411 are Periplasmic-facing; sequence STALIEYTGDK. A helical transmembrane segment spans residues 412 to 432; it reads ASPGYWMSFAAICGLLATCYL. Topologically, residues 433 to 444 are cytoplasmic; sequence YRRSAVALQTAR.

Belongs to the major facilitator superfamily. Metabolite:H+ Symporter (MHS) family (TC 2.A.1.6) family.

It localises to the cell inner membrane. Uptake of citrate across the boundary membrane with the concomitant transport of protons into the cell (symport system). The sequence is that of Citrate-proton symporter (citH) from Klebsiella pneumoniae.